A 259-amino-acid polypeptide reads, in one-letter code: UPF0246 protein PFL_1025 (259 aa).

Belongs to the UPF0246 family.

The polypeptide is UPF0246 protein PFL_1025 (Pseudomonas fluorescens (strain ATCC BAA-477 / NRRL B-23932 / Pf-5)).